The sequence spans 125 residues: MORF4 family-associated protein 1 (125 aa).

The interval 76 to 99 (ESALNHLQGAGGAEPRGPRAEKAD) is disordered. Positions 94–124 (RAEKADEKAQEMAKMAEMLVQLVRRIEKSES) form a coiled coil.

The protein belongs to the MORF4 family-associated protein family. As to quaternary structure, found in a complex composed of MORF4L1, MRFAP1 and RB1. Interacts via its N-terminus with MORF4L1. Interacts with CSTB and MORF4L2. Widely expressed in all tissues examined and as early as 7 days during embryonic development.

The protein resides in the nucleus. The protein localises to the cytoplasm. Its subcellular location is the perinuclear region. In Mus musculus (Mouse), this protein is MORF4 family-associated protein 1.